Here is a 660-residue protein sequence, read N- to C-terminus: Methionine--tRNA ligase 1 (660 aa).

The short motif at 15–25 (YYPSGKLHIGH) is the 'HIGH' region element. Positions 310–314 (KMSKS) match the 'KMSKS' region motif. Residue Lys-313 coordinates ATP. A tRNA-binding domain is found at 560 to 660 (DFFKVELRVA…QNLPNGTKIK (101 aa)).

The protein belongs to the class-I aminoacyl-tRNA synthetase family. MetG type 2B subfamily. In terms of assembly, homodimer.

It is found in the cytoplasm. It catalyses the reaction tRNA(Met) + L-methionine + ATP = L-methionyl-tRNA(Met) + AMP + diphosphate. Its function is as follows. Is required not only for elongation of protein synthesis but also for the initiation of all mRNA translation through initiator tRNA(fMet) aminoacylation. This chain is Methionine--tRNA ligase 1, found in Bacillus cereus (strain ATCC 14579 / DSM 31 / CCUG 7414 / JCM 2152 / NBRC 15305 / NCIMB 9373 / NCTC 2599 / NRRL B-3711).